Reading from the N-terminus, the 282-residue chain is tRNA pseudouridine synthase B (282 aa).

The active-site Nucleophile is D36.

The protein belongs to the pseudouridine synthase TruB family. Type 1 subfamily.

It catalyses the reaction uridine(55) in tRNA = pseudouridine(55) in tRNA. Functionally, responsible for synthesis of pseudouridine from uracil-55 in the psi GC loop of transfer RNAs. The sequence is that of tRNA pseudouridine synthase B from Mycoplasmopsis pulmonis (strain UAB CTIP) (Mycoplasma pulmonis).